The chain runs to 398 residues: S-adenosylmethionine synthase (398 aa).

136 to 141 is a binding site for ATP; the sequence is GTGSSD.

Belongs to the AdoMet synthase 2 family. The cofactor is Mg(2+).

It catalyses the reaction L-methionine + ATP + H2O = S-adenosyl-L-methionine + phosphate + diphosphate. It functions in the pathway amino-acid biosynthesis; S-adenosyl-L-methionine biosynthesis; S-adenosyl-L-methionine from L-methionine: step 1/1. Catalyzes the formation of S-adenosylmethionine from methionine and ATP. The polypeptide is S-adenosylmethionine synthase (Methanosarcina mazei (strain ATCC BAA-159 / DSM 3647 / Goe1 / Go1 / JCM 11833 / OCM 88) (Methanosarcina frisia)).